The sequence spans 621 residues: Endoglucanase 25 (621 aa).

The segment at 1 to 26 (MYGRDPWGGPLEINTADSATDDDRSR) is disordered. Over 1 to 70 (MYGRDPWGGP…DLGCIIVSRK (70 aa)) the chain is Cytoplasmic. Residues 48 to 49 (LL) form a polarized targeting signal 1 (PTS1) region. The polarized targeting signal 2 (PTS2) stretch occupies residues 59–62 (YVDL). Residues 71 to 91 (IFVWTVGTLVAAALLAGFITL) traverse the membrane as a helical; Signal-anchor for type II membrane protein segment. The Extracellular segment spans residues 92–621 (IVKTVPRHHP…PPPPPAPWKP (530 aa)). Residues asparagine 108 and asparagine 133 are each glycosylated (N-linked (GlcNAc...) asparagine). Residue aspartate 165 is the Nucleophile of the active site. N-linked (GlcNAc...) asparagine glycans are attached at residues asparagine 216, asparagine 324, asparagine 345, asparagine 408, and asparagine 425. Active-site residues include histidine 513 and aspartate 561. Asparagine 567 is a glycosylation site (N-linked (GlcNAc...) asparagine). The active site involves glutamate 570.

This sequence belongs to the glycosyl hydrolase 9 (cellulase E) family. Post-translationally, glycosylated. N-glycosylation of KOR in the endoplasmic reticulum followed by N-glycan modifications in the Golgi are essential for catalytic activity. As to expression, highly expressed in roots and stems, at intermediate levels in leaves and flowers, and at lower levels in siliques. Expressed in xylem (at protein level).

It localises to the cell membrane. The enzyme catalyses Endohydrolysis of (1-&gt;4)-beta-D-glucosidic linkages in cellulose, lichenin and cereal beta-D-glucans.. Required for cellulose microfibril formation. Involved in cell wall assembly during cell elongation and cell plate maturation in cytokinesis. Required for secondary cell wall formation in the developing xylem. May cycle through different intracellular compartments, including plasma membrane. In Arabidopsis thaliana (Mouse-ear cress), this protein is Endoglucanase 25 (KOR).